Here is a 251-residue protein sequence, read N- to C-terminus: ATP synthase subunit a (251 aa).

A run of 6 helical transmembrane segments spans residues N30–L50, F86–F106, I116–W136, F145–V165, F195–L215, and I219–L239.

This sequence belongs to the ATPase A chain family. F-type ATPases have 2 components, CF(1) - the catalytic core - and CF(0) - the membrane proton channel. CF(1) has five subunits: alpha(3), beta(3), gamma(1), delta(1), epsilon(1). CF(0) has three main subunits: a(1), b(2) and c(9-12). The alpha and beta chains form an alternating ring which encloses part of the gamma chain. CF(1) is attached to CF(0) by a central stalk formed by the gamma and epsilon chains, while a peripheral stalk is formed by the delta and b chains.

It is found in the cell inner membrane. Its function is as follows. Key component of the proton channel; it plays a direct role in the translocation of protons across the membrane. This chain is ATP synthase subunit a, found in Acidiphilium cryptum (strain JF-5).